Consider the following 63-residue polypeptide: Period circadian protein (63 aa).

Positions Glu1 to Lys63 are disordered. 2 stretches are compositionally biased toward low complexity: residues Ser9 to Thr31 and Ser39 to Ala49. Positions Val54–Lys63 are enriched in polar residues.

In terms of assembly, forms a heterodimer with timeless (TIM); the complex then translocates into the nucleus. In terms of processing, phosphorylated with a circadian rhythmicity, probably by the double-time protein (dbt). Phosphorylation could be implicated in the stability of per monomer and in the formation of heterodimer per-tim.

Its subcellular location is the nucleus. It is found in the cytoplasm. The protein localises to the perinuclear region. Functionally, essential for biological clock functions. Determines the period length of circadian and ultradian rhythms; an increase in PER dosage leads to shortened circadian rhythms and a decrease leads to lengthened circadian rhythms. Essential for the circadian rhythmicity of locomotor activity, eclosion behavior, and for the rhythmic component of the male courtship song that originates in the thoracic nervous system. The biological cycle depends on the rhythmic formation and nuclear localization of the TIM-PER complex. Light induces the degradation of TIM, which promotes elimination of PER. Nuclear activity of the heterodimer coordinatively regulates PER and TIM transcription through a negative feedback loop. Behaves as a negative element in circadian transcriptional loop. Does not appear to bind DNA, suggesting indirect transcriptional inhibition. In Drosophila immigrans (Fruit fly), this protein is Period circadian protein (per).